A 318-amino-acid chain; its full sequence is NADH-ubiquinone oxidoreductase chain 1 (318 aa).

A run of 8 helical transmembrane segments spans residues phenylalanine 2–leucine 22, phenylalanine 69–leucine 89, leucine 102–alanine 122, methionine 146–alanine 166, histidine 171–alanine 191, leucine 222–phenylalanine 242, glutamate 253–valine 273, and leucine 294–isoleucine 314.

The protein belongs to the complex I subunit 1 family.

The protein localises to the mitochondrion inner membrane. It carries out the reaction a ubiquinone + NADH + 5 H(+)(in) = a ubiquinol + NAD(+) + 4 H(+)(out). Core subunit of the mitochondrial membrane respiratory chain NADH dehydrogenase (Complex I) that is believed to belong to the minimal assembly required for catalysis. Complex I functions in the transfer of electrons from NADH to the respiratory chain. The immediate electron acceptor for the enzyme is believed to be ubiquinone. The chain is NADH-ubiquinone oxidoreductase chain 1 (MT-ND1) from Loxodonta africana (African elephant).